The sequence spans 241 residues: Ribonuclease PH (241 aa).

Residues Arg87 and 125–127 (GTR) each bind phosphate.

This sequence belongs to the RNase PH family. In terms of assembly, homohexameric ring arranged as a trimer of dimers.

The enzyme catalyses tRNA(n+1) + phosphate = tRNA(n) + a ribonucleoside 5'-diphosphate. In terms of biological role, phosphorolytic 3'-5' exoribonuclease that plays an important role in tRNA 3'-end maturation. Removes nucleotide residues following the 3'-CCA terminus of tRNAs; can also add nucleotides to the ends of RNA molecules by using nucleoside diphosphates as substrates, but this may not be physiologically important. Probably plays a role in initiation of 16S rRNA degradation (leading to ribosome degradation) during starvation. This chain is Ribonuclease PH, found in Dehalococcoides mccartyi (strain ATCC BAA-2100 / JCM 16839 / KCTC 5957 / BAV1).